The chain runs to 829 residues: G-type lectin S-receptor-like serine/threonine-protein kinase At1g34300 (829 aa).

A signal peptide spans 1–25 (MAVKTPFLKLLPLLLLLLHFPFSFS). 2 consecutive Bulb-type lectin domains span residues 26–140 (TIPL…SSFD) and 143–260 (TDTI…PVNA). The Extracellular segment spans residues 26-421 (TIPLGSVIYA…KGDDNNSKVH (396 aa)). N-linked (GlcNAc...) asparagine glycans are attached at residues N46, N98, N130, N151, N172, N178, N189, and N195. The EGF-like domain maps to 264–301 (AVDQCLVYGYCGNFGICSYNDTNPICSCPSRNFDFVDV). 5 disulfides stabilise this stretch: C268/C280, C274/C289, C317/C399, C350/C373, and C354/C360. N-linked (GlcNAc...) asparagine glycans are attached at residues N283 and N320. Positions 317–399 (CSGNTTMLDL…VPSTSYVKVC (83 aa)) constitute an Apple domain. The N-linked (GlcNAc...) asparagine glycan is linked to N416. A helical membrane pass occupies residues 422–442 (LWIVAVAVIAGLLGLVAVEIG). Residues 443–829 (LWWCCCRKNP…RISEGSMLGS (387 aa)) are Cytoplasmic-facing. A Protein kinase domain is found at 484-759 (KSFKEKLGAG…GKVVQMLEGI (276 aa)). ATP is bound by residues 490–498 (LGAGGFGTV) and K512. S532 bears the Phosphoserine mark. The tract at residues 572-589 (DSAKFLTWEYRFNIALGT) is caM-binding. Residue D608 is the Proton acceptor of the active site. Phosphoserine is present on residues S625 and S799.

The protein belongs to the protein kinase superfamily. Ser/Thr protein kinase family.

The protein localises to the cell membrane. It carries out the reaction L-seryl-[protein] + ATP = O-phospho-L-seryl-[protein] + ADP + H(+). The enzyme catalyses L-threonyl-[protein] + ATP = O-phospho-L-threonyl-[protein] + ADP + H(+). This is G-type lectin S-receptor-like serine/threonine-protein kinase At1g34300 from Arabidopsis thaliana (Mouse-ear cress).